The primary structure comprises 305 residues: Tyrosine recombinase XerC (305 aa).

Residues 4-95 (TQIQELIIKW…AIKNFYKFLE (92 aa)) form the Core-binding (CB) domain. A Tyr recombinase domain is found at 116–298 (LLPKALSEEE…SIKHLETAYV (183 aa)). Catalysis depends on residues arginine 159, lysine 182, histidine 250, arginine 253, and histidine 276. The active-site O-(3'-phospho-DNA)-tyrosine intermediate is tyrosine 285.

Belongs to the 'phage' integrase family. XerC subfamily. Forms a cyclic heterotetrameric complex composed of two molecules of XerC and two molecules of XerD.

Its subcellular location is the cytoplasm. Its function is as follows. Site-specific tyrosine recombinase, which acts by catalyzing the cutting and rejoining of the recombining DNA molecules. The XerC-XerD complex is essential to convert dimers of the bacterial chromosome into monomers to permit their segregation at cell division. It also contributes to the segregational stability of plasmids. The chain is Tyrosine recombinase XerC from Rickettsia bellii (strain RML369-C).